Reading from the N-terminus, the 430-residue chain is Glucose-1-phosphate adenylyltransferase (430 aa).

Residues glycine 163, glutamate 178–lysine 179, and serine 210 contribute to the alpha-D-glucose 1-phosphate site.

It belongs to the bacterial/plant glucose-1-phosphate adenylyltransferase family. Homotetramer.

The catalysed reaction is alpha-D-glucose 1-phosphate + ATP + H(+) = ADP-alpha-D-glucose + diphosphate. It functions in the pathway glycan biosynthesis; glycogen biosynthesis. Functionally, involved in the biosynthesis of ADP-glucose, a building block required for the elongation reactions to produce glycogen. Catalyzes the reaction between ATP and alpha-D-glucose 1-phosphate (G1P) to produce pyrophosphate and ADP-Glc. This Synechococcus elongatus (strain ATCC 33912 / PCC 7942 / FACHB-805) (Anacystis nidulans R2) protein is Glucose-1-phosphate adenylyltransferase.